A 105-amino-acid chain; its full sequence is uncharacterized protein (105 aa).

The span at Met1–Ala11 shows a compositional bias: basic residues. A disordered region spans residues Met1 to His20.

It belongs to the ALB1 family.

It is found in the nucleus. The protein localises to the nucleolus. This is an uncharacterized protein from Schizosaccharomyces pombe (strain 972 / ATCC 24843) (Fission yeast).